The chain runs to 168 residues: Phosphopantetheine adenylyltransferase (168 aa).

Thr-9 provides a ligand contact to substrate. ATP-binding positions include 9–10 (TF) and His-17. 3 residues coordinate substrate: Lys-41, Leu-74, and Arg-88. ATP is bound by residues 89–91 (GLR), Glu-99, and 124–130 (LQPIASR).

It belongs to the bacterial CoaD family. In terms of assembly, homohexamer. Mg(2+) is required as a cofactor.

The protein resides in the cytoplasm. It catalyses the reaction (R)-4'-phosphopantetheine + ATP + H(+) = 3'-dephospho-CoA + diphosphate. Its pathway is cofactor biosynthesis; coenzyme A biosynthesis; CoA from (R)-pantothenate: step 4/5. Its function is as follows. Reversibly transfers an adenylyl group from ATP to 4'-phosphopantetheine, yielding dephospho-CoA (dPCoA) and pyrophosphate. This is Phosphopantetheine adenylyltransferase from Sphingopyxis alaskensis (strain DSM 13593 / LMG 18877 / RB2256) (Sphingomonas alaskensis).